Here is a 393-residue protein sequence, read N- to C-terminus: Acetylornithine aminotransferase (393 aa).

Residues 100 to 101 and Phe-132 each bind pyridoxal 5'-phosphate; that span reads GT. Arg-135 is a binding site for N(2)-acetyl-L-ornithine. 217-220 contacts pyridoxal 5'-phosphate; that stretch reads DEIQ. Lys-246 carries the N6-(pyridoxal phosphate)lysine modification. Ser-275 is a N(2)-acetyl-L-ornithine binding site. Thr-276 is a binding site for pyridoxal 5'-phosphate.

The protein belongs to the class-III pyridoxal-phosphate-dependent aminotransferase family. ArgD subfamily. Homodimer. Pyridoxal 5'-phosphate is required as a cofactor.

The protein localises to the cytoplasm. It carries out the reaction N(2)-acetyl-L-ornithine + 2-oxoglutarate = N-acetyl-L-glutamate 5-semialdehyde + L-glutamate. It participates in amino-acid biosynthesis; L-arginine biosynthesis; N(2)-acetyl-L-ornithine from L-glutamate: step 4/4. In Campylobacter jejuni subsp. jejuni serotype O:2 (strain ATCC 700819 / NCTC 11168), this protein is Acetylornithine aminotransferase.